Here is a 145-residue protein sequence, read N- to C-terminus: Basic phospholipase A2 cL037 (145 aa).

The N-terminal stretch at 1–21 is a signal peptide; that stretch reads MYPAHLLVLLAVCVSLLGASA. The propeptide occupies 22-27; sequence ILPLPL. 7 disulfide bridges follow: Cys-38–Cys-98, Cys-54–Cys-144, Cys-56–Cys-72, Cys-71–Cys-125, Cys-78–Cys-118, Cys-87–Cys-111, and Cys-105–Cys-116. The Ca(2+) site is built by Tyr-55, Gly-57, and Gly-59. His-75 is a catalytic residue. Asp-76 serves as a coordination point for Ca(2+). The active site involves Asp-119.

The protein belongs to the phospholipase A2 family. Group I subfamily. D49 sub-subfamily. The cofactor is Ca(2+). In terms of tissue distribution, expressed by the venom gland.

It is found in the secreted. The catalysed reaction is a 1,2-diacyl-sn-glycero-3-phosphocholine + H2O = a 1-acyl-sn-glycero-3-phosphocholine + a fatty acid + H(+). Its function is as follows. PLA2 catalyzes the calcium-dependent hydrolysis of the 2-acyl groups in 3-sn-phosphoglycerides. The protein is Basic phospholipase A2 cL037 of Laticauda semifasciata (Black-banded sea krait).